The chain runs to 798 residues: Integrin beta-1-A (798 aa).

The N-terminal stretch at 1-21 (MAHYPVFTVGLLTCLVLCINA) is a signal peptide. Residues 22–727 (QQGGTECLKA…VKEPECPSGP (706 aa)) lie on the Extracellular side of the membrane. The PSI domain maps to 27–77 (ECLKANAKSCGECIQAGPNCGWCTKVDFLQEGEPTSARCDDLAALKSKGCP). 28 cysteine pairs are disulfide-bonded: cysteine 28–cysteine 46, cysteine 36–cysteine 464, cysteine 39–cysteine 65, cysteine 49–cysteine 76, cysteine 206–cysteine 212, cysteine 260–cysteine 300, cysteine 400–cysteine 414, cysteine 434–cysteine 462, cysteine 466–cysteine 486, cysteine 477–cysteine 489, cysteine 491–cysteine 500, cysteine 502–cysteine 533, cysteine 516–cysteine 531, cysteine 525–cysteine 536, cysteine 538–cysteine 553, cysteine 555–cysteine 576, cysteine 560–cysteine 574, cysteine 568–cysteine 579, cysteine 581–cysteine 590, cysteine 592–cysteine 615, cysteine 599–cysteine 613, cysteine 607–cysteine 618, cysteine 620–cysteine 630, cysteine 633–cysteine 636, cysteine 640–cysteine 691, cysteine 646–cysteine 665, cysteine 649–cysteine 661, and cysteine 699–cysteine 723. The tract at residues 76–106 (CPEDDIQNPRGRKQKLKDIPITSKGKGERMD) is disordered. Residues asparagine 109 and asparagine 131 are each glycosylated (N-linked (GlcNAc...) asparagine). The region spanning 139-377 (DYPIDLYYLM…QLIIDSYNSL (239 aa)) is the VWFA domain. Serine 151 and serine 153 together coordinate Mg(2+). Positions 153, 156, 157, and 188 each coordinate Ca(2+). 2 N-linked (GlcNAc...) asparagine glycosylation sites follow: asparagine 211 and asparagine 223. Ca(2+) contacts are provided by asparagine 243, aspartate 245, proline 247, and glutamate 248. Glutamate 248 serves as a coordination point for Mg(2+). Asparagine 268 and asparagine 362 each carry an N-linked (GlcNAc...) asparagine glycan. N-linked (GlcNAc...) asparagine glycosylation occurs at asparagine 416. I-EGF domains are found at residues 466–501 (CQDKGTPNSPECHFGNGTFECGACRCNDGRIGKECE), 502–554 (CSTD…KYCE), 555–591 (CDNFNCDRSNGLICGGKGICKCRVCECFPNYSGSACD), and 592–631 (CSEDTSTCMAKNGQICNGRGICDCGRCKCTDPKFQGPTCE). Residue asparagine 481 is glycosylated (N-linked (GlcNAc...) asparagine). Asparagine 520 carries an N-linked (GlcNAc...) asparagine glycan. N-linked (GlcNAc...) asparagine glycosylation is present at asparagine 584. A glycan (N-linked (GlcNAc...) asparagine) is linked at asparagine 669. A helical transmembrane segment spans residues 728-751 (DIIPIVAGVVAGIVLIGLALLLIW). Residues 752–798 (KLLMIIHDRREFAKFEKEKMNAKWDTGENPIYKSAVTTVVNPKYEGK) are Cytoplasmic-facing. Position 783 is a phosphotyrosine (tyrosine 783).

Belongs to the integrin beta chain family. In terms of assembly, heterodimer of an alpha and a beta subunit.

Its subcellular location is the cell membrane. It localises to the cell projection. It is found in the invadopodium membrane. The protein resides in the ruffle membrane. The protein localises to the melanosome. Its subcellular location is the cleavage furrow. It localises to the lamellipodium. It is found in the ruffle. Its function is as follows. Beta integrins associate with alpha subunits to form receptor complexes that recognize the sequence R-G-D in a wide array of ligands. May be involved in osteoblast compaction. May play role in myoblast differentiation and fusion during skeletal myogenesis. This Xenopus laevis (African clawed frog) protein is Integrin beta-1-A (itgb1-a).